A 438-amino-acid polypeptide reads, in one-letter code: 23S rRNA (uracil(1939)-C(5))-methyltransferase RlmD (438 aa).

The TRAM domain maps to 10-68 (KTKNVQTITADILDLDYQGLGVAKINGKTWFIENALPHEKVECRILEDKRQYGHAIVKK). Residues Cys81, Cys87, Cys90, and Cys168 each coordinate [4Fe-4S] cluster. S-adenosyl-L-methionine contacts are provided by Gln271, Phe300, Asn305, Glu321, Asp348, and Asp369. Residue Cys395 is the Nucleophile of the active site.

The protein belongs to the class I-like SAM-binding methyltransferase superfamily. RNA M5U methyltransferase family. RlmD subfamily.

It catalyses the reaction uridine(1939) in 23S rRNA + S-adenosyl-L-methionine = 5-methyluridine(1939) in 23S rRNA + S-adenosyl-L-homocysteine + H(+). In terms of biological role, catalyzes the formation of 5-methyl-uridine at position 1939 (m5U1939) in 23S rRNA. The protein is 23S rRNA (uracil(1939)-C(5))-methyltransferase RlmD of Haemophilus influenzae (strain ATCC 51907 / DSM 11121 / KW20 / Rd).